We begin with the raw amino-acid sequence, 83 residues long: Small ribosomal subunit protein eS21 (83 aa).

Belongs to the eukaryotic ribosomal protein eS21 family. In terms of assembly, component of the 40S small ribosomal subunit. Interacts with sta.

The protein localises to the cytoplasm. The protein resides in the cytosol. It localises to the rough endoplasmic reticulum. May be an associated component of the ribosome rather than a core structural subunit. May act as a translation initiation factor. Has a role in regulation of cell proliferation in the hematopoietic organs and the imaginal disks of larva. This is Small ribosomal subunit protein eS21 (RpS21) from Drosophila ananassae (Fruit fly).